Reading from the N-terminus, the 418-residue chain is Thyroxine-binding globulin (418 aa).

The signal sequence occupies residues 1–20 (MSVFFYLFVLVFGLQATIHC). Asn24, Asn39, Asn102, Asn168, Asn227, and Asn256 each carry an N-linked (GlcNAc...) asparagine glycan. Residues Asn296 and Lys401 each coordinate thyroxine.

This sequence belongs to the serpin family.

The protein resides in the secreted. Its function is as follows. Major thyroid hormone transport protein in serum. This Mus musculus (Mouse) protein is Thyroxine-binding globulin (Serpina7).